Reading from the N-terminus, the 211-residue chain is ATP phosphoribosyltransferase (211 aa).

It belongs to the ATP phosphoribosyltransferase family. Short subfamily. As to quaternary structure, heteromultimer composed of HisG and HisZ subunits.

It localises to the cytoplasm. The enzyme catalyses 1-(5-phospho-beta-D-ribosyl)-ATP + diphosphate = 5-phospho-alpha-D-ribose 1-diphosphate + ATP. It participates in amino-acid biosynthesis; L-histidine biosynthesis; L-histidine from 5-phospho-alpha-D-ribose 1-diphosphate: step 1/9. Functionally, catalyzes the condensation of ATP and 5-phosphoribose 1-diphosphate to form N'-(5'-phosphoribosyl)-ATP (PR-ATP). Has a crucial role in the pathway because the rate of histidine biosynthesis seems to be controlled primarily by regulation of HisG enzymatic activity. The protein is ATP phosphoribosyltransferase of Bacillus mycoides (strain KBAB4) (Bacillus weihenstephanensis).